Consider the following 366-residue polypeptide: Beta sliding clamp (366 aa).

The protein belongs to the beta sliding clamp family. Forms a ring-shaped head-to-tail homodimer around DNA which binds and tethers DNA polymerases and other proteins to the DNA. The DNA replisome complex has a single clamp-loading complex (3 tau and 1 each of delta, delta', psi and chi subunits) which binds 3 Pol III cores (1 core on the leading strand and 2 on the lagging strand) each with a beta sliding clamp dimer. Additional proteins in the replisome are other copies of gamma, psi and chi, Ssb, DNA helicase and RNA primase.

The protein localises to the cytoplasm. Confers DNA tethering and processivity to DNA polymerases and other proteins. Acts as a clamp, forming a ring around DNA (a reaction catalyzed by the clamp-loading complex) which diffuses in an ATP-independent manner freely and bidirectionally along dsDNA. Initially characterized for its ability to contact the catalytic subunit of DNA polymerase III (Pol III), a complex, multichain enzyme responsible for most of the replicative synthesis in bacteria; Pol III exhibits 3'-5' exonuclease proofreading activity. The beta chain is required for initiation of replication as well as for processivity of DNA replication. This chain is Beta sliding clamp (dnaN), found in Chlamydia muridarum (strain MoPn / Nigg).